A 490-amino-acid polypeptide reads, in one-letter code: Glutamyl-tRNA(Gln) amidotransferase subunit A (490 aa).

Active-site charge relay system residues include Lys78 and Ser153. Ser177 serves as the catalytic Acyl-ester intermediate.

It belongs to the amidase family. GatA subfamily. As to quaternary structure, heterotrimer of A, B and C subunits.

It carries out the reaction L-glutamyl-tRNA(Gln) + L-glutamine + ATP + H2O = L-glutaminyl-tRNA(Gln) + L-glutamate + ADP + phosphate + H(+). Allows the formation of correctly charged Gln-tRNA(Gln) through the transamidation of misacylated Glu-tRNA(Gln) in organisms which lack glutaminyl-tRNA synthetase. The reaction takes place in the presence of glutamine and ATP through an activated gamma-phospho-Glu-tRNA(Gln). This chain is Glutamyl-tRNA(Gln) amidotransferase subunit A, found in Bdellovibrio bacteriovorus (strain ATCC 15356 / DSM 50701 / NCIMB 9529 / HD100).